Reading from the N-terminus, the 495-residue chain is D-hydantoinase/dihydropyrimidinase (495 aa).

Zn(2+)-binding residues include His59, His61, and Lys150. Lys150 carries the post-translational modification N6-carboxylysine. Tyr155 is a binding site for substrate. Positions 183 and 239 each coordinate Zn(2+). A substrate-binding site is contributed by Ser289. Asp316 contributes to the Zn(2+) binding site. Asn337 contacts substrate.

Belongs to the metallo-dependent hydrolases superfamily. Hydantoinase/dihydropyrimidinase family. In terms of assembly, homotetramer. Requires Zn(2+) as cofactor. In terms of processing, carboxylation allows a single lysine to coordinate two zinc ions.

It catalyses the reaction 5,6-dihydrouracil + H2O = 3-(carbamoylamino)propanoate + H(+). Its function is as follows. Catalyzes the hydrolysis of dihydropyrimidines and of the structurally related DL-5-mono-substituted hydantoins, to produce N-carbamoyl-D-amino acids. The protein is D-hydantoinase/dihydropyrimidinase of Pseudomonas putida (Arthrobacter siderocapsulatus).